The chain runs to 219 residues: MSRDASHAALRRRLAETHLRAEVYRDQTLQLHREGVSTQDPRFVGAFMAAKAAHLELEARLKSRARLEMMRQRATCVKIRVEEQAARRDFLTAHRRYLDPALSERLDAADDRLADQEEQLEEAAANASLWGDGDLADGWMSPGDSDLLVMWQLTSAPKVHTDAPSRPGSRPTYTPSAAGRPDAQAAPPPETAPSPEPAPGPAADPASGSGFARDCPDGE.

Positions 159 to 219 are disordered; that stretch reads VHTDAPSRPG…GFARDCPDGE (61 aa). Residues 186–202 show a composition bias toward pro residues; it reads APPPETAPSPEPAPGPA.

The protein belongs to the alphaherpesvirinae HHV-1 UL14 protein family. Post-translationally, phosphorylated.

The protein localises to the virion tegument. It is found in the host cytoplasm. Its subcellular location is the host nucleus. In terms of biological role, contributes to the nuclear transport of the viral transcriptional activator VP16 during the early phase of infection. Therefore, participates indirectly in the regulation of the immediate-early gene expression. Additionally, seems to be important for efficient nuclear targeting of capsids. This chain is Tegument protein UL14, found in Human herpesvirus 2 (strain HG52) (HHV-2).